The following is a 141-amino-acid chain: Nucleoside diphosphate kinase (141 aa).

ATP-binding residues include K9, F57, R85, T91, R102, and N112. H115 acts as the Pros-phosphohistidine intermediate in catalysis.

The protein belongs to the NDK family. In terms of assembly, homotetramer. It depends on Mg(2+) as a cofactor.

It is found in the cytoplasm. The catalysed reaction is a 2'-deoxyribonucleoside 5'-diphosphate + ATP = a 2'-deoxyribonucleoside 5'-triphosphate + ADP. It carries out the reaction a ribonucleoside 5'-diphosphate + ATP = a ribonucleoside 5'-triphosphate + ADP. Its function is as follows. Major role in the synthesis of nucleoside triphosphates other than ATP. The ATP gamma phosphate is transferred to the NDP beta phosphate via a ping-pong mechanism, using a phosphorylated active-site intermediate. In Chlamydia trachomatis serovar A (strain ATCC VR-571B / DSM 19440 / HAR-13), this protein is Nucleoside diphosphate kinase.